Reading from the N-terminus, the 686-residue chain is 3',5'-cyclic-AMP phosphodiesterase 4C (686 aa).

A phosphoserine mark is found at Ser9, Ser28, Ser40, and Ser83. Disordered regions lie at residues 88-116 and 124-143; these read NGLP…VHHV and YRSD…TSSA. The span at 124–133 shows a compositional bias: basic and acidic residues; it reads YRSDSDHEPS. Residues 313 to 642 enclose the PDEase domain; that stretch reads VQTDQEEQLA…EWYQSRIPCS (330 aa). His389 serves as the catalytic Proton donor. His389 contacts 3',5'-cyclic AMP. 2 residues coordinate AMP: His389 and His393. Zn(2+)-binding residues include His393, His429, Asp430, and Asp547. Positions 430, 547, 598, and 601 each coordinate AMP. Mg(2+) is bound at residue Asp430. Residue Asp430 participates in Mn(2+) binding. Residues Gln598 and Phe601 each coordinate 3',5'-cyclic AMP. Residue Ser642 is modified to Phosphoserine. The span at 660–671 shows a compositional bias: acidic residues; it reads EAEEEEEEEDEG. The interval 660–686 is disordered; it reads EAEEEEEEEDEGQCTALNRESSELPST. Residues 674–686 are compositionally biased toward polar residues; the sequence is TALNRESSELPST.

It belongs to the cyclic nucleotide phosphodiesterase family. PDE4 subfamily. Part of a complex containing AKAP5, ADCY5, ADCY6 and PKD2. Zn(2+) serves as cofactor. Mg(2+) is required as a cofactor. It depends on Mn(2+) as a cofactor.

It is found in the cell projection. It localises to the cilium. The catalysed reaction is 3',5'-cyclic AMP + H2O = AMP + H(+). It functions in the pathway purine metabolism; 3',5'-cyclic AMP degradation; AMP from 3',5'-cyclic AMP: step 1/1. In terms of biological role, hydrolyzes the second messenger cAMP, which is a key regulator of many important physiological processes. In Mus musculus (Mouse), this protein is 3',5'-cyclic-AMP phosphodiesterase 4C.